Reading from the N-terminus, the 501-residue chain is Adenylosuccinate synthetase 2, chloroplastic (501 aa).

Residues 87–93 (GDEGKGK) and 115–117 (GHT) each bind GTP. Residue D88 is the Proton acceptor of the active site. The Mg(2+) site is built by D88 and G115. IMP contacts are provided by residues 88-91 (DEGK), 113-116 (NAGH), T205, R219, Q300, T315, and R379. H116 functions as the Proton donor in the catalytic mechanism. 375–381 (NITGRPR) is a binding site for substrate. Residues R381, 407–409 (KLD), and 490–492 (GIG) contribute to the GTP site.

It belongs to the adenylosuccinate synthetase family. In terms of assembly, homodimer. Requires Mg(2+) as cofactor.

The protein localises to the plastid. Its subcellular location is the chloroplast. It catalyses the reaction IMP + L-aspartate + GTP = N(6)-(1,2-dicarboxyethyl)-AMP + GDP + phosphate + 2 H(+). The protein operates within purine metabolism; AMP biosynthesis via de novo pathway; AMP from IMP: step 1/2. Its function is as follows. Plays an important role in the de novo pathway and in the salvage pathway of purine nucleotide biosynthesis. Catalyzes the first committed step in the biosynthesis of AMP from IMP. The polypeptide is Adenylosuccinate synthetase 2, chloroplastic (Capsicum frutescens (Cayenne pepper)).